Consider the following 367-residue polypeptide: GTP cyclohydrolase FolE2 (367 aa).

It belongs to the GTP cyclohydrolase IV family.

The catalysed reaction is GTP + H2O = 7,8-dihydroneopterin 3'-triphosphate + formate + H(+). It participates in cofactor biosynthesis; 7,8-dihydroneopterin triphosphate biosynthesis; 7,8-dihydroneopterin triphosphate from GTP: step 1/1. Functionally, converts GTP to 7,8-dihydroneopterin triphosphate. This is GTP cyclohydrolase FolE2 from Roseobacter denitrificans (strain ATCC 33942 / OCh 114) (Erythrobacter sp. (strain OCh 114)).